The chain runs to 101 residues: Carboxysome shell vertex protein CcmL (101 aa).

The region spanning 1-84 (MQIAKVRGTV…VDAAVVAIID (84 aa)) is the BMV domain.

This sequence belongs to the CcmL/EutN family. CcmL subfamily. As to quaternary structure, homopentamer. Interacts with full-length CcmM.

The protein localises to the carboxysome. In terms of biological role, probably forms vertices in the carboxysome, a polyhedral inclusion where RuBisCO (ribulose bisphosphate carboxylase, rbcL-rbcS) is sequestered. Has been modeled to induce curvature upon insertion into an otherwise flat hexagonal molecular layer of CcmK subunits. The polypeptide is Carboxysome shell vertex protein CcmL (Nostoc sp. (strain PCC 7120 / SAG 25.82 / UTEX 2576)).